The sequence spans 277 residues: 3-methyl-2-oxobutanoate hydroxymethyltransferase (277 aa).

Mg(2+) is bound by residues aspartate 43 and aspartate 82. 3-methyl-2-oxobutanoate contacts are provided by residues 43–44 (DS), aspartate 82, and lysine 112. Residue glutamate 114 participates in Mg(2+) binding. The active-site Proton acceptor is the glutamate 181.

The protein belongs to the PanB family. Homodecamer; pentamer of dimers. It depends on Mg(2+) as a cofactor.

The protein resides in the cytoplasm. It carries out the reaction 3-methyl-2-oxobutanoate + (6R)-5,10-methylene-5,6,7,8-tetrahydrofolate + H2O = 2-dehydropantoate + (6S)-5,6,7,8-tetrahydrofolate. It functions in the pathway cofactor biosynthesis; (R)-pantothenate biosynthesis; (R)-pantoate from 3-methyl-2-oxobutanoate: step 1/2. Catalyzes the reversible reaction in which hydroxymethyl group from 5,10-methylenetetrahydrofolate is transferred onto alpha-ketoisovalerate to form ketopantoate. The sequence is that of 3-methyl-2-oxobutanoate hydroxymethyltransferase from Listeria innocua serovar 6a (strain ATCC BAA-680 / CLIP 11262).